A 523-amino-acid polypeptide reads, in one-letter code: MSSMQFSSVLPLEGKACVSPVRREGSACERLKIGDSSSIRHERASRRMCNGGARGPAATGAQCVLTSDASPADTLVLRTSFRRNYADPNEVAAVILGGGTGTQLFPLTSTRATPAVPIGGCYRLIDIPMSNCFNSGINKIFVMTQFNSASLNRHIHRTYLGGGINFTDGSVEVLAATQMPGEAAGWFRGTADAVRKFIWVLEDYYKHKSIEHILILSGDQLYRMDYMELVQKHVDDNADITLSCAPVGESRASEYGLVKFDSSGRVIQFSEKPKGDDLEAMKVDTSFLNFAIDDPAKYPYIASMGVYVFKRDVLLNLLKSRYAELHDFGSEILPRALHDHNVQAYVFTDYWEDIGTIRSFFDANMALCEQPPKFEFYDPKTPFFTSPRYLPPTKSDKCRIKEAIISHGCFLRECKIEHSIIGVRSRLNSGSELKNAMMMGADSYETEDEISRLMSEGKVPIGVGENTKISNCIIDMNARIGRDVVISNKEGVQEADRPEEGYYIRSGIVVIQKNATIKDGTVV.

The transit peptide at 1–49 directs the protein to the chloroplast; that stretch reads MSSMQFSSVLPLEGKACVSPVRREGSACERLKIGDSSSIRHERASRRMC.

It belongs to the bacterial/plant glucose-1-phosphate adenylyltransferase family. Heterotetramer. In terms of tissue distribution, starchy endosperm and roots.

The protein resides in the plastid. Its subcellular location is the chloroplast. It is found in the amyloplast. The catalysed reaction is alpha-D-glucose 1-phosphate + ATP + H(+) = ADP-alpha-D-glucose + diphosphate. Its pathway is glycan biosynthesis; starch biosynthesis. With respect to regulation, highly active without 3'phosphoglycerate, and is only slightly affected by the activator 3'phosphoglycerate and inhibitor orthophosphate. In terms of biological role, this protein plays a role in synthesis of starch. It catalyzes the synthesis of the activated glycosyl donor, ADP-glucose from Glc-1-P and ATP. The chain is Glucose-1-phosphate adenylyltransferase large subunit 1, chloroplastic/amyloplastic from Hordeum vulgare (Barley).